A 372-amino-acid polypeptide reads, in one-letter code: D-alanine--D-alanine ligase (372 aa).

Residues 145-349 (KTVLRAGGIP…CPNLLDQLIE (205 aa)) form the ATP-grasp domain. Residue 176–231 (DRWGTSELFVKAVSLGSSVATLPVKTETEFTKAVKEVFRYDDRLMVEPRIRGREIE) coordinates ATP. Mg(2+)-binding residues include Asp-303, Glu-316, and Asn-318.

It belongs to the D-alanine--D-alanine ligase family. Mg(2+) is required as a cofactor. The cofactor is Mn(2+).

The protein localises to the cytoplasm. It carries out the reaction 2 D-alanine + ATP = D-alanyl-D-alanine + ADP + phosphate + H(+). Its pathway is cell wall biogenesis; peptidoglycan biosynthesis. Its function is as follows. Cell wall formation. In Coxiella burnetii (strain Dugway 5J108-111), this protein is D-alanine--D-alanine ligase.